We begin with the raw amino-acid sequence, 542 residues long: MKLSKSTLIATLALTATSTNALVVQNPFSNIQQALKLDLSYDKLTSKLTDTFEQGKANIISTIAKVMNEPLDGLTPEIKNIWSEMLMKFPNSITELNFKAPPKKGKITTQQFDFHVTDAQVPNHKLRIKSTPKDLGIDTVKQYSGYLDVVDEDKHFFYYFFESRNDPKNDPVILWLNGGPGCSSLTGLFFELGPSSIDKNLKPVYNPHSWNANASVIFLDQPINVGYSYSSQSVSNTIAAGKDVYAFLQLFFKNFPEYANLDFHIAGESYAGHYIPAFASEILTHPERNFNLTSVLIGNGLTDPLVQYEYYEPMACGEGGEPSVLEPEECDGMLNSLPRCLSLIESCYESGSVWSCVPATIYCNNGQMGPYQKTGRNVYDIRTMCEGSSLCYSQLEYIDQYLNLPEVKKALGAEVDEYQSCNFDINRNFMFAGDWMKPYQKNVIDLLEKELPVLIYAGDKDFICNWLGNQAWTNRLEWSGSKGFTKAPVKSWKVGKNAAGEVKNYKHFTFLRVFGGGHMVPYDQPENALDMVNRWISGDYKY.

The first 21 residues, 1 to 21 (MKLSKSTLIATLALTATSTNA), serve as a signal peptide directing secretion. The propeptide occupies 22-127 (LVVQNPFSNI…DAQVPNHKLR (106 aa)). 5 cysteine pairs are disulfide-bonded: cysteine 182/cysteine 421, cysteine 316/cysteine 330, cysteine 340/cysteine 363, cysteine 347/cysteine 356, and cysteine 385/cysteine 391. Residue asparagine 213 is glycosylated (N-linked (GlcNAc...) asparagine). Serine 269 is a catalytic residue. N-linked (GlcNAc...) asparagine glycosylation is present at asparagine 291. Residue aspartate 461 is part of the active site. Cysteine 464 contacts substrate. Residue histidine 518 is part of the active site. Methionine 519 is a binding site for substrate.

Belongs to the peptidase S10 family.

The protein resides in the vacuole. It carries out the reaction Release of a C-terminal amino acid with broad specificity.. Involved in degradation of small peptides. This is Carboxypeptidase Y (CPY1) from Candida albicans (Yeast).